The following is a 281-amino-acid chain: 32 kDa heat shock protein (281 aa).

Acidic residues predominate over residues 142–168 (EDDEEIDSDEEFGDSDQDEEDSDDEEI). The segment at 142-281 (EDDEEIDSDE…NENNKKKQKN (140 aa)) is disordered. A compositionally biased stretch (basic and acidic residues) spans 180 to 209 (KITEISEVPESKKEKTPEPKKVPEPKKEQV). Residues 210 to 273 (KQPTQPQQKK…NNKRPQNQNE (64 aa)) show a composition bias toward low complexity.

The chain is 32 kDa heat shock protein (hspC) from Dictyostelium discoideum (Social amoeba).